A 159-amino-acid polypeptide reads, in one-letter code: Transcriptional repressor NrdR (159 aa).

A zinc finger lies at 3 to 34; it reads CPFCNAADSKVIDSRLAAEGCQIRRRRECISC. An ATP-cone domain is found at 49–139; the sequence is PRVIKSNGKN…VYQDFQDVEA (91 aa).

It belongs to the NrdR family. Requires Zn(2+) as cofactor.

Negatively regulates transcription of bacterial ribonucleotide reductase nrd genes and operons by binding to NrdR-boxes. The polypeptide is Transcriptional repressor NrdR (Acinetobacter baylyi (strain ATCC 33305 / BD413 / ADP1)).